The sequence spans 519 residues: Sugar transport protein MST5 (519 aa).

Over 1-18 (MAGGAMVQTVGGKTYPGK) the chain is Cytoplasmic. Residues 19–39 (MTAFVFFTCLVASSGGLIFGY) form a helical membrane-spanning segment. At 40 to 80 (DIGISGGVTSMDSFLSEFFPSVYAQAKASKDTNQYCKFDSQ) the chain is on the extracellular side. A helical transmembrane segment spans residues 81-101 (LLTLFTSSLYLAALATSFVAA). Topologically, residues 102–110 (WVTRVFGRK) are cytoplasmic. A helical membrane pass occupies residues 111 to 127 (WSMFCGGVTFLAGSALN). Residue glycine 128 is a topological domain, extracellular. A helical membrane pass occupies residues 129–149 (AATDVMMLILGRILLGIGVGF). The Cytoplasmic segment spans residues 150 to 167 (ANQSVPLYLSEMAPANLR). A helical membrane pass occupies residues 168–188 (GMLNIGFQLMTTIGILSANLI). Over 189-202 (NYATSSIEGGWGWR) the chain is Extracellular. The helical transmembrane segment at 203-223 (IGLGLAGVPALIITLGALVLP) threads the bilayer. Topologically, residues 224-295 (DTPNSLIARG…IAILIPCFQQ (72 aa)) are cytoplasmic. Residues 296–316 (LTGINVIMFYAPVLFLTIGFA) form a helical membrane-spanning segment. The Extracellular segment spans residues 317 to 321 (GDASL). Residues 322–342 (MSAVITGLVNMFATVVSIISV) form a helical membrane-spanning segment. Residues 343–357 (DRLGRRVLFLQGGTQ) lie on the Cytoplasmic side of the membrane. A helical transmembrane segment spans residues 358–378 (MFISQVVVGTLIALQFGVAGV). Topologically, residues 379–386 (GEMSRSYA) are extracellular. A helical membrane pass occupies residues 387–407 (ILLVLFICMYVAGFAWSWGPL). At 408-426 (GWLVPSEVFALEIRSAGQS) the chain is on the cytoplasmic side. The chain crosses the membrane as a helical span at residues 427–447 (IAVCVNMMLTFVIGQAFLTML). Residues 448-451 (CHLK) are Extracellular-facing. A helical transmembrane segment spans residues 452–472 (FGLFYFFAGWMLVMTTFVALF). At 473-519 (LPETKGVPIEEMNHVWSRHWFWGSYVTAHDVAGAGAGGGGNRRSHNV) the chain is on the cytoplasmic side.

The protein belongs to the major facilitator superfamily. Sugar transporter (TC 2.A.1.1) family. In terms of tissue distribution, expressed in panicles before heading. Expressed in flowers before pollination.

Its subcellular location is the membrane. Functionally, mediates active uptake of hexoses by sugar:proton symport. Can transport glucose, xylose and 3-O-methylglucose. May play a role at the early stage of seed development. The sequence is that of Sugar transport protein MST5 from Oryza sativa subsp. japonica (Rice).